The primary structure comprises 312 residues: Coiled-coil domain-containing protein 42 homolog (312 aa).

Coiled-coil stretches lie at residues Arg-34 to Glu-121 and Ala-172 to Gln-233.

It belongs to the CFAP73 family.

The protein is Coiled-coil domain-containing protein 42 homolog of Nematostella vectensis (Starlet sea anemone).